A 150-amino-acid polypeptide reads, in one-letter code: Phylloplanin (150 aa).

The N-terminal stretch at 1-23 is a signal peptide; that stretch reads MASAKIFLIFLLAALIATPAAFA.

Probably covalently linked to cuticular lipids and/or trichome exudate diterpens or sugar esters in order to increase the solubility in exudate and the dispersion on the leaf surface. Expressed in small glandular secreting trichomes (SGTs).

It is found in the secreted. In terms of biological role, inhibits spore germination and leaf infection by fungal pathogens. This is Phylloplanin from Nicotiana tabacum (Common tobacco).